The chain runs to 87 residues: Large ribosomal subunit protein eL33 (87 aa).

It belongs to the eukaryotic ribosomal protein eL33 family.

This is Large ribosomal subunit protein eL33 from Pyrococcus woesei.